The primary structure comprises 505 residues: Glutamate--tRNA ligase (505 aa).

A 'HIGH' region motif is present at residues Pro-12–Gly-22. The 'KMSKS' region motif lies at Lys-260–Arg-264. Lys-263 is a binding site for ATP.

This sequence belongs to the class-I aminoacyl-tRNA synthetase family. Glutamate--tRNA ligase type 1 subfamily. Monomer.

It localises to the cytoplasm. The catalysed reaction is tRNA(Glu) + L-glutamate + ATP = L-glutamyl-tRNA(Glu) + AMP + diphosphate. Its function is as follows. Catalyzes the attachment of glutamate to tRNA(Glu) in a two-step reaction: glutamate is first activated by ATP to form Glu-AMP and then transferred to the acceptor end of tRNA(Glu). The chain is Glutamate--tRNA ligase from Parabacteroides distasonis (strain ATCC 8503 / DSM 20701 / CIP 104284 / JCM 5825 / NCTC 11152).